Consider the following 315-residue polypeptide: MTTMQLDSDGRLRHLLTLEGLPRTTLLQLLDRAGQIRDAAVGRVGKRSVLAGTAVCTLFFEPSTRTRSSFHLAAQRLGADVLNFDASTSSTRKGETARDTLKNLEAMGVRGFVVRHPDDGAVEALAAAAGEGTALINAGDGRSAHPTQGLLDMLTLRQAKGTDFSKLKVVIVGDVKHSRVARSDLHALRTLGAGEIRVCGPVSLLPDDGMLEGCVVGQDFDAMLEGADALMMLRLQRERMEEGLVPSLEQYHTEYGLTCERLARAGRDAAVLHPGPINRGVEITDEVADGAQSCVLRQVANGVAVRMAVLETLLG.

Carbamoyl phosphate is bound by residues R65 and T66. K93 is an L-aspartate binding site. 3 residues coordinate carbamoyl phosphate: R115, H145, and Q148. 2 residues coordinate L-aspartate: R179 and R234. Carbamoyl phosphate is bound by residues G275 and P276.

The protein belongs to the aspartate/ornithine carbamoyltransferase superfamily. ATCase family. As to quaternary structure, heterododecamer (2C3:3R2) of six catalytic PyrB chains organized as two trimers (C3), and six regulatory PyrI chains organized as three dimers (R2).

The enzyme catalyses carbamoyl phosphate + L-aspartate = N-carbamoyl-L-aspartate + phosphate + H(+). It functions in the pathway pyrimidine metabolism; UMP biosynthesis via de novo pathway; (S)-dihydroorotate from bicarbonate: step 2/3. Catalyzes the condensation of carbamoyl phosphate and aspartate to form carbamoyl aspartate and inorganic phosphate, the committed step in the de novo pyrimidine nucleotide biosynthesis pathway. This is Aspartate carbamoyltransferase catalytic subunit from Xanthomonas axonopodis pv. citri (strain 306).